A 956-amino-acid chain; its full sequence is uncharacterized protein (956 aa).

The Fibronectin type-III domain maps to 40 to 141; that stretch reads PATKVSIDKI…IYCMTKAREA (102 aa). Disordered stretches follow at residues 152 to 173 and 488 to 600; these read RNTITSSTAMQPRNSKSEPAPL and NNGD…SYSH. Composition is skewed to polar residues over residues 153 to 165 and 488 to 523; these read NTITSSTAMQPRN and NNGDSLAATNSNNSAEKNRSSGSIQLPLSNNMSRTG. Residue Thr-154 is modified to Phosphothreonine. Phosphoserine is present on residues Ser-501 and Ser-520. The span at 524–543 shows a compositional bias: low complexity; it reads SIDLISNNNKSINNSNADSA. Over residues 552–563 the composition is skewed to polar residues; it reads VSYSPSNEPIQP. Residues 564–574 are compositionally biased toward low complexity; that stretch reads SSSLLSQLTQD. Polar residues predominate over residues 578-599; that stretch reads RSMLSNHISSNNENKQQPSSYS. Phosphoserine is present on residues Ser-802, Ser-842, and Ser-895. The disordered stretch occupies residues 875–956; the sequence is VGPKVPAKEP…NLFNPHSHDS (82 aa). The span at 895–904 shows a compositional bias: low complexity; sequence SNSSISSAWS.

This is an uncharacterized protein from Saccharomyces cerevisiae (strain ATCC 204508 / S288c) (Baker's yeast).